The sequence spans 160 residues: MVPKLFTSPICLLLLLGLMGVEGSLHAKPGQFTWAQWFEIQHINMTSGQCTNAMLVINNYQRRCKNQNTFLLTTFADVVHVCGNPSMPCPSNTSLNNCHHSGVQVPLIHCNLTTPSQNISNCKYTQTTANKFYIVACNNSDPVRDPPQYPVVPVHLDRVI.

The N-terminal stretch at 1–27 is a signal peptide; it reads MVPKLFTSPICLLLLLGLMGVEGSLHA. W34 carries a C-linked (Man) tryptophan glycan. The active-site Proton acceptor is H42. N44 carries N-linked (GlcNAc...) asparagine glycosylation. 4 cysteine pairs are disulfide-bonded: C50/C110, C64/C122, C82/C137, and C89/C98. At Y60 the chain carries 3'-nitrotyrosine. Residue 65–69 coordinates substrate; the sequence is KNQNT. N92, N111, N118, and N138 each carry an N-linked (GlcNAc...) asparagine glycan. H155 (proton donor) is an active-site residue.

It belongs to the pancreatic ribonuclease family. Interacts with and forms a tight 1:1 complex with RNH1. Dimerization of two such complexes may occur.

It localises to the lysosome. The protein resides in the cytoplasmic granule. The catalysed reaction is an [RNA] containing cytidine + H2O = an [RNA]-3'-cytidine-3'-phosphate + a 5'-hydroxy-ribonucleotide-3'-[RNA].. It catalyses the reaction an [RNA] containing uridine + H2O = an [RNA]-3'-uridine-3'-phosphate + a 5'-hydroxy-ribonucleotide-3'-[RNA].. In terms of biological role, this is a non-secretory ribonuclease. It is a pyrimidine specific nuclease with a slight preference for U. Cytotoxin and helminthotoxin. Possesses a wide variety of biological activities. The polypeptide is Non-secretory ribonuclease (RNASE2) (Chlorocebus aethiops (Green monkey)).